The primary structure comprises 146 residues: Ecotin-like protein 1 (146 aa).

This sequence belongs to the protease inhibitor I11 (ecotin) family.

The chain is Ecotin-like protein 1 (ISP1) from Leishmania infantum.